Reading from the N-terminus, the 633-residue chain is Putative serine/threonine-protein kinase L232 (633 aa).

One can recognise a Protein kinase domain in the interval 10-314 (YTIVDKLSEG…QSRKLFYEIL (305 aa)). ATP is bound by residues 16–24 (LSEGTYGIV) and K39. D133 functions as the Proton acceptor in the catalytic mechanism.

It belongs to the protein kinase superfamily. Ser/Thr protein kinase family.

It carries out the reaction L-seryl-[protein] + ATP = O-phospho-L-seryl-[protein] + ADP + H(+). The enzyme catalyses L-threonyl-[protein] + ATP = O-phospho-L-threonyl-[protein] + ADP + H(+). The chain is Putative serine/threonine-protein kinase L232 from Acanthamoeba polyphaga mimivirus (APMV).